The primary structure comprises 497 residues: Probable cytosol aminopeptidase (497 aa).

Mn(2+) contacts are provided by Lys267 and Asp272. Residue Lys279 is part of the active site. Residues Asp290, Asp349, and Glu351 each contribute to the Mn(2+) site. The active site involves Arg353.

It belongs to the peptidase M17 family. Requires Mn(2+) as cofactor.

Its subcellular location is the cytoplasm. The catalysed reaction is Release of an N-terminal amino acid, Xaa-|-Yaa-, in which Xaa is preferably Leu, but may be other amino acids including Pro although not Arg or Lys, and Yaa may be Pro. Amino acid amides and methyl esters are also readily hydrolyzed, but rates on arylamides are exceedingly low.. The enzyme catalyses Release of an N-terminal amino acid, preferentially leucine, but not glutamic or aspartic acids.. Its function is as follows. Presumably involved in the processing and regular turnover of intracellular proteins. Catalyzes the removal of unsubstituted N-terminal amino acids from various peptides. This is Probable cytosol aminopeptidase from Pseudomonas putida (strain GB-1).